We begin with the raw amino-acid sequence, 133 residues long: uncharacterized protein (133 aa).

A helical transmembrane segment spans residues 11–31; sequence YFLISVFLIFIVSGITYFYST.

It is found in the membrane. This is an uncharacterized protein from Borreliella burgdorferi (strain ATCC 35210 / DSM 4680 / CIP 102532 / B31) (Borrelia burgdorferi).